Reading from the N-terminus, the 418-residue chain is AP-3 complex subunit mu-2 (418 aa).

The 242-residue stretch at 176–417 folds into the MHD domain; it reads NNEAYFDVVE…MTKAGKFQVR (242 aa).

The protein belongs to the adaptor complexes medium subunit family. As to quaternary structure, adaptor protein complex 3 (AP-3) is a heterotetramer composed of two large adaptins (delta-type subunit AP3D1 and beta-type subunit AP3B1 or AP3B2), a medium adaptin (mu-type subunit AP3M1 or AP3M2) and a small adaptin (sigma-type subunit APS1 or AP3S2). AP-3 associates with the BLOC-1 complex.

Its subcellular location is the golgi apparatus. The protein resides in the cytoplasmic vesicle membrane. In terms of biological role, component of the adaptor complexes which link clathrin to receptors in coated vesicles. Clathrin-associated protein complexes are believed to interact with the cytoplasmic tails of membrane proteins, leading to their selection and concentration. Ap47 is a subunit of the plasma membrane adaptor. In concert with the BLOC-1 complex, AP-3 is required to target cargos into vesicles assembled at cell bodies for delivery into neurites and nerve terminals. The protein is AP-3 complex subunit mu-2 (Ap3m2) of Mus musculus (Mouse).